Consider the following 1498-residue polypeptide: Transposon Ty3-I Gag-Pol polyprotein (1498 aa).

The CCHC-type zinc-finger motif lies at 265–282; that stretch reads RLCFYCKKEGHRLNECRA. The active-site For protease activity; shared with dimeric partner is D336. Residues 470–490 are disordered; it reads TDPKSAGNRGNPRNTKLSLAP. The region spanning 646-823 is the Reverse transcriptase domain; sequence LDNKFIVPSK…EETEFLGYSI (178 aa). Mg(2+)-binding residues include D712, D774, and D775. The RNase H Ty3/gyspy-type domain occupies 919 to 1037; it reads DASKDGIGAV…VADAISRAIY (119 aa). An integrase-type zinc finger-like region spans residues 1132–1171; the sequence is HTLFGGHFGVTVTLAKISPIYYWPKLQHSIIQYIRTCVQC. One can recognise an Integrase catalytic domain in the interval 1185-1350; it reads LQPLPIAEGR…SPFEIDLGYL (166 aa). Mg(2+) contacts are provided by D1201 and D1262.

As to quaternary structure, the protease is a homodimer, whose active site consists of two apposed aspartic acid residues. In terms of processing, initially, virus-like particles (VLPs) are composed of the structural unprocessed proteins Gag and Gag-Pol, and also contain the host initiator methionine tRNA (tRNA(i)-Met) which serves as a primer for minus-strand DNA synthesis, and a dimer of genomic Ty RNA. Processing of the polyproteins occurs within the particle and proceeds by an ordered pathway, called maturation. First, the protease (PR) is released by autocatalytic cleavage of the Gag-Pol polyprotein, and this cleavage is a prerequisite for subsequent processing at the remaining sites to release the mature structural and catalytic proteins. Maturation takes place prior to the RT reaction and is required to produce transposition-competent VLPs.

Its subcellular location is the cytoplasm. The protein resides in the nucleus. The catalysed reaction is DNA(n) + a 2'-deoxyribonucleoside 5'-triphosphate = DNA(n+1) + diphosphate. It carries out the reaction Endonucleolytic cleavage to 5'-phosphomonoester.. Capsid protein (CA) is the structural component of the virus-like particle (VLP), forming the shell that encapsulates the genomic RNA-nucleocapsid complex. Functionally, nucleocapsid protein p11 (NC) forms the nucleocore that coats the retro-elements dimeric RNA. Binds these RNAs through its zinc fingers. Promotes primer tRNA(i)-Met annealing to the multipartite primer-binding site (PBS), dimerization of Ty3 RNA and initiation of reverse transcription. In terms of biological role, the aspartyl protease (PR) mediates the proteolytic cleavages of the Gag and Gag-Pol polyproteins after assembly of the VLP. Its function is as follows. Reverse transcriptase/ribonuclease H (RT) is a multifunctional enzyme that catalyzes the conversion of the retro-elements RNA genome into dsDNA within the VLP. The enzyme displays a DNA polymerase activity that can copy either DNA or RNA templates, and a ribonuclease H (RNase H) activity that cleaves the RNA strand of RNA-DNA heteroduplexes during plus-strand synthesis and hydrolyzes RNA primers. The conversion leads to a linear dsDNA copy of the retrotransposon that includes long terminal repeats (LTRs) at both ends. Integrase (IN) targets the VLP to the nucleus, where a subparticle preintegration complex (PIC) containing at least integrase and the newly synthesized dsDNA copy of the retrotransposon must transit the nuclear membrane. Once in the nucleus, integrase performs the integration of the dsDNA into the host genome. In Saccharomyces cerevisiae (strain ATCC 204508 / S288c) (Baker's yeast), this protein is Transposon Ty3-I Gag-Pol polyprotein (TY3B-I).